A 158-amino-acid chain; its full sequence is Male-specific protein scotti (158 aa).

The disordered stretch occupies residues 24–43 (NVPDGNGDGDGDGDGDGNDA). Positions 30–42 (GDGDGDGDGDGND) are enriched in acidic residues.

This sequence belongs to the male-specific scotti family.

Its function is as follows. Post-meiotically transcribed gene that has a role in late spermiogenesis; required for actin cone progression during spermatid individualization. This chain is Male-specific protein scotti, found in Drosophila virilis (Fruit fly).